A 242-amino-acid chain; its full sequence is ATP-dependent dethiobiotin synthetase BioD (242 aa).

Position 12 to 17 (12 to 17) interacts with ATP; sequence EVGKTV. Mg(2+) is bound at residue T16. The active site involves K37. S41 is a substrate binding site. ATP is bound by residues D51 and 112-115; that span reads EGAG. Residues D51 and E112 each coordinate Mg(2+).

This sequence belongs to the dethiobiotin synthetase family. In terms of assembly, homodimer. The cofactor is Mg(2+).

The protein resides in the cytoplasm. It catalyses the reaction (7R,8S)-7,8-diammoniononanoate + CO2 + ATP = (4R,5S)-dethiobiotin + ADP + phosphate + 3 H(+). It functions in the pathway cofactor biosynthesis; biotin biosynthesis; biotin from 7,8-diaminononanoate: step 1/2. Its function is as follows. Catalyzes a mechanistically unusual reaction, the ATP-dependent insertion of CO2 between the N7 and N8 nitrogen atoms of 7,8-diaminopelargonic acid (DAPA, also called 7,8-diammoniononanoate) to form a ureido ring. The sequence is that of ATP-dependent dethiobiotin synthetase BioD from Bacillus cereus (strain AH820).